A 65-amino-acid chain; its full sequence is Large ribosomal subunit protein bL35 (65 aa).

A disordered region spans residues 1-65; that stretch reads MPKMKTNRAA…GRLDRMLPYL (65 aa). A compositionally biased stretch (basic residues) spans 10-44; it reads AAKRFRKTASGKYKAGHANRSHILTKKATKRKRNL. Basic and acidic residues predominate over residues 50 to 65; it reads VRAEDAGRLDRMLPYL.

The protein belongs to the bacterial ribosomal protein bL35 family.

The chain is Large ribosomal subunit protein bL35 from Xylella fastidiosa (strain M12).